The primary structure comprises 101 residues: Glutaredoxin-1 (101 aa).

One can recognise a Glutaredoxin domain in the interval Lys-5 to Leu-101. Cysteines 25 and 28 form a disulfide.

Belongs to the glutaredoxin family.

It localises to the cytoplasm. The protein resides in the cytosol. In terms of biological role, multifunctional enzyme with glutathione-dependent oxidoreductase, glutathione peroxidase and glutathione S-transferase (GST) activity. The disulfide bond functions as an electron carrier in the glutathione-dependent synthesis of deoxyribonucleotides by the enzyme ribonucleotide reductase. In addition, it is also involved in reducing cytosolic protein- and non-protein-disulfides in a coupled system with glutathione reductase. May play a role in protection against oxidative stress caused by superoxide in vivo by regulating the redox state of the protein sulfhydryl groups. This chain is Glutaredoxin-1, found in Rhizophagus irregularis (strain DAOM 181602 / DAOM 197198 / MUCL 43194) (Arbuscular mycorrhizal fungus).